Consider the following 589-residue polypeptide: MKKTKIVSTLGPASDDIETITKLAEAGANVFRFNFSHGNHEEHLARMNMVREVEKKTGKLLGIALDTKGAEIRTTDQEGGKFTINTGDEIRVSMDATKAGNKDMIHVTYPGLFDDTHVGGTVLIDDGAVGLTIKAKDEEKRELVCEAQNTGVIGSKKGVNAPGVEIRLPGITEKDTDDIRFGLKHGINFIFASFVRKAQDVLDIRALCEEANASYVKIFPKIESQEGIDNIDEILQVSDGLMVARGDMGVEIPFINVPFVQKTLIKKCNALGKPVITATQMLDSMQENPRPTRAEVTDVANAVLDGTDATMLSGESANGLYPVQSVQAMHDIDVRTEKELDTRNTLALQRFEEYKGSNVTEAIGESVVRTAQELGVKTIIAATSSGYTARMISKYRPDATIVALTFDEKIQHSLGIVWGVEPVLAKKPSNTDEMFEEAARVAKEHGFVKDGDLVIIVAGVPFGQSGTTNLMKLQIIGNQLAQGLGVGTGSVIGKAVVANSAEEANAKVHEGDILVAKTTDKDYMPAIKKASGMIVEASGLTSHAAVVGVSLGIPVVVGVADATSKIADGSTLTVDARRGAIYQGEVSNL.

R32 contributes to the substrate binding site. K(+)-binding residues include N34, S36, D66, and T67. 34–37 (NFSH) is an ATP binding site. Residues R73 and K157 each contribute to the ATP site. Mg(2+) is bound at residue E223. Substrate-binding residues include G246, D247, and T279. D247 serves as a coordination point for Mg(2+).

Belongs to the pyruvate kinase family. This sequence in the C-terminal section; belongs to the PEP-utilizing enzyme family. Homotetramer. Requires Mg(2+) as cofactor. K(+) serves as cofactor.

It catalyses the reaction pyruvate + ATP = phosphoenolpyruvate + ADP + H(+). It functions in the pathway carbohydrate degradation; glycolysis; pyruvate from D-glyceraldehyde 3-phosphate: step 5/5. Its activity is regulated as follows. Strongly activated by glucose-6-phosphate, ribose-5-phosphate and fructose-6-phosphate. Weak activator AMP and weak inhibitor fructose-1,6-bisphosphate can act as strong inhibitors in the presence of strong activators. This chain is Pyruvate kinase (pyk), found in Lactobacillus delbrueckii subsp. bulgaricus.